A 270-amino-acid polypeptide reads, in one-letter code: 4-hydroxy-tetrahydrodipicolinate reductase (270 aa).

NAD(+)-binding positions include 8–13 and Glu-34; that span reads GAAGRM. An NADP(+)-binding site is contributed by Arg-35. Residues 98–100 and 122–125 each bind NAD(+); these read GST and SPNM. His-155 functions as the Proton donor/acceptor in the catalytic mechanism. His-156 is a (S)-2,3,4,5-tetrahydrodipicolinate binding site. Lys-159 serves as the catalytic Proton donor. 165–166 contributes to the (S)-2,3,4,5-tetrahydrodipicolinate binding site; sequence GT.

This sequence belongs to the DapB family.

It is found in the cytoplasm. It carries out the reaction (S)-2,3,4,5-tetrahydrodipicolinate + NAD(+) + H2O = (2S,4S)-4-hydroxy-2,3,4,5-tetrahydrodipicolinate + NADH + H(+). The catalysed reaction is (S)-2,3,4,5-tetrahydrodipicolinate + NADP(+) + H2O = (2S,4S)-4-hydroxy-2,3,4,5-tetrahydrodipicolinate + NADPH + H(+). The protein operates within amino-acid biosynthesis; L-lysine biosynthesis via DAP pathway; (S)-tetrahydrodipicolinate from L-aspartate: step 4/4. In terms of biological role, catalyzes the conversion of 4-hydroxy-tetrahydrodipicolinate (HTPA) to tetrahydrodipicolinate. The polypeptide is 4-hydroxy-tetrahydrodipicolinate reductase (Anaeromyxobacter dehalogenans (strain 2CP-1 / ATCC BAA-258)).